A 283-amino-acid chain; its full sequence is Acetylglutamate kinase (283 aa).

Substrate is bound by residues 63–64, Arg85, and Asn178; that span reads GG.

The protein belongs to the acetylglutamate kinase family. ArgB subfamily.

It localises to the cytoplasm. The catalysed reaction is N-acetyl-L-glutamate + ATP = N-acetyl-L-glutamyl 5-phosphate + ADP. Its pathway is amino-acid biosynthesis; L-arginine biosynthesis; N(2)-acetyl-L-ornithine from L-glutamate: step 2/4. Catalyzes the ATP-dependent phosphorylation of N-acetyl-L-glutamate. The sequence is that of Acetylglutamate kinase from Prochlorococcus marinus (strain MIT 9215).